A 315-amino-acid chain; its full sequence is Bifunctional pinoresinol-lariciresinol reductase (315 aa).

NADP(+) is bound by residues 14–20 (GGTGYLG), Arg39, and Lys48. The active-site Proton acceptor is Lys142. Arg146 contributes to the NADP(+) binding site. Residue His274 coordinates substrate.

The protein belongs to the NmrA-type oxidoreductase family. Isoflavone reductase subfamily. Dimer.

The catalysed reaction is (+)-lariciresinol + NADP(+) = (+)-pinoresinol + NADPH + H(+). The enzyme catalyses (-)-secoisolariciresinol + NADP(+) = (+)-lariciresinol + NADPH + H(+). In terms of biological role, reductase involved in lignan (-)-hinokinin biosynthesis. Catalyzes the enantioselective conversion of (+)-pinoresinol into (+)-lariciresinol and of (+)-lariciresinol into (-)-secoisolariciresinol. Abstracts the 4R-hydride from the NADPH cofactor during catalysis. Has also a low phenylcoumaran benzylic ether reductase activity. In Linum corymbulosum (Linum), this protein is Bifunctional pinoresinol-lariciresinol reductase (PLR_Lc1).